A 577-amino-acid polypeptide reads, in one-letter code: Adenine deaminase (577 aa).

It belongs to the metallo-dependent hydrolases superfamily. Adenine deaminase family. Mn(2+) serves as cofactor.

It carries out the reaction adenine + H2O + H(+) = hypoxanthine + NH4(+). The polypeptide is Adenine deaminase (adeC) (Bacillus subtilis (strain 168)).